Here is a 387-residue protein sequence, read N- to C-terminus: Probable multidrug resistance protein EmrK (387 aa).

The Cytoplasmic segment spans residues 1-16; the sequence is MEQINSNKKHSNRRKY. A helical transmembrane segment spans residues 17 to 37; sequence FSLLAVVLFIAFSGAYAYWSM. At 38–387 the chain is on the periplasmic side; sequence ELEDMISTDD…SNIISHNGQL (350 aa).

The protein belongs to the membrane fusion protein (MFP) (TC 8.A.1) family. As to quaternary structure, part of the tripartite efflux system EmrYK-TolC, which is composed of an inner membrane transporter, EmrY, a membrane fusion protein, EmrK, and an outer membrane component, TolC. The complex forms a large protein conduit and can translocate molecules across both the inner and outer membranes.

The protein localises to the cell inner membrane. Part of the tripartite efflux system EmrYK-TolC, which confers resistance to various drugs. This chain is Probable multidrug resistance protein EmrK (emrK), found in Escherichia coli (strain K12).